A 247-amino-acid chain; its full sequence is ATP synthase subunit a, chloroplastic (247 aa).

5 consecutive transmembrane segments (helical) span residues 38 to 58 (QVLI…LIAV), 95 to 115 (VPFI…GALL), 134 to 154 (INTT…AGLS), 199 to 219 (LVVV…VMFL), and 220 to 240 (GLFT…AYIG).

Belongs to the ATPase A chain family. In terms of assembly, F-type ATPases have 2 components, CF(1) - the catalytic core - and CF(0) - the membrane proton channel. CF(1) has five subunits: alpha(3), beta(3), gamma(1), delta(1), epsilon(1). CF(0) has four main subunits: a, b, b' and c.

Its subcellular location is the plastid. The protein localises to the chloroplast thylakoid membrane. Functionally, key component of the proton channel; it plays a direct role in the translocation of protons across the membrane. This chain is ATP synthase subunit a, chloroplastic, found in Brachypodium distachyon (Purple false brome).